The following is a 103-amino-acid chain: Salivary thrombin inhibitor anophelin (103 aa).

A signal peptide spans 1 to 21 (MASKLFVLAFLCLALVVVVQS). Residues 24–103 (QYARGDVPTY…PAASSSESDE (80 aa)) are disordered. A blocks exosite I of host thrombin region spans residues 56-68 (EEFDPSLLEEHAD). Residues 74–77 (DPGR) form a blocks active site cleft of host thrombin in a reverse direction compared to substrates region. The span at 91 to 103 (ASAPAASSSESDE) shows a compositional bias: low complexity.

This sequence belongs to the anophelin family. In terms of assembly, interacts with human F2 (thrombin); the interaction results in thrombin inhibition. Female salivary gland (at protein level). Not detected in female midgut, head, carcass and male tissues (at protein level).

It is found in the secreted. Increasing concentration of NaCl decreases affinity for thrombin. Salivary protein with anticoagulant activity that inhibits host thrombin (F2); binds to the proteinase in a reverse orientation (opposite to substrates). The chain is Salivary thrombin inhibitor anophelin from Anopheles gambiae (African malaria mosquito).